The following is a 161-amino-acid chain: Nucleotide-binding protein Pput_4372 (161 aa).

This sequence belongs to the YajQ family.

Its function is as follows. Nucleotide-binding protein. The polypeptide is Nucleotide-binding protein Pput_4372 (Pseudomonas putida (strain ATCC 700007 / DSM 6899 / JCM 31910 / BCRC 17059 / LMG 24140 / F1)).